A 189-amino-acid chain; its full sequence is Auxin-responsive protein IAA6 (189 aa).

The EAR-like (transcriptional repression) motif lies at 13 to 17 (LRLGL). Residues 93–178 (IGYVKVSMDG…SCKRLRIVKR (86 aa)) enclose the PB1 domain.

Belongs to the Aux/IAA family. In terms of assembly, homodimers and heterodimers. Interacts with TPL. Highly expressed in stems and flowers.

Its subcellular location is the nucleus. Its function is as follows. Aux/IAA proteins are short-lived transcriptional factors that function as repressors of early auxin response genes at low auxin concentrations. Repression is thought to result from the interaction with auxin response factors (ARFs), proteins that bind to the auxin-responsive promoter element (AuxRE). Formation of heterodimers with ARF proteins may alter their ability to modulate early auxin response genes expression. This is Auxin-responsive protein IAA6 (IAA6) from Arabidopsis thaliana (Mouse-ear cress).